A 1846-amino-acid chain; its full sequence is MILDKFKNIVNLSNSNTEKEEGKNAEINENNDPNTQLAHEPSIVEADEKTFFDEMLGAPQYTYDEFLQVLKNPIEERGDTEDMKKHWGYPRRWKVILWDLHIQNYMNNDFNAFVDFDFGGNREECRIQRGSTMKIYAKGKTKNCLRTPVVTNVATEQKKNMNFRNVFEYRGSYLDLENEKLRIRVWEYKQFTLNKLEGIYEEPLLSFAVGEIYNETTLYKFIKDSRVKRCRLYFQLYFQELYDFELSFLNWSFSDLLSSSYIQAKSYNYLSNKNNVKKRYIDDTSCNIFPHMCKNFKRFHKKKIYRKVRNYDIDKNFSFNTALSDDSDERKNKNDRTIKNLEKLFVRNLTLMQNIEENEDMSYKNLQNINLPNPRVTITLSHTPKGHEGLNIISIEQKSIRFPIWENLGEIYFRGTLRDLDVSYLNIKVEDMSAPKSAREIGTCQISLKGIVDYPYVMHELEAPSWLVKEAKYEGWENKLNEWKLGTVEGKVIINRVPRYRQRGDIYHIDSKQPYLIVHIFNIDKIITVDNIKELDTYVEVSFDETSRRTRLMKKTLSPNYDSQISIPLRFNNKNDINYENLSKKGLIYIDVWGKSEDIVYIGGISISPYEIFFNEKNVRRNKTKLEHIDLETNVKITYDTVVYRGCKKLCFLHDDQRMSNIHFSIWTYPDILGNSTNQKKIVAPVSFNTTMNFPIKLAEKYNKLKKLFMEVLKTIKSIPENCTDVNTSTRFYNYELINQRKEKHFLPTLITSIKSPYCAESMNAIFHYVRCIPFIHKKENIIFTPDFTLQLKGGNALDHSLLLCSLFLGIPVLAFVCFGTLWDKQKHSWVATFEYNDEKNYGIVKFWETTTGNVYILKKRFIDHNRLKGLELKLKESKYKSHLRNGFLQRYENNTDINYIKEQTKRHIKQLFKNRINDIPIGGPSLPYKTIDLIFNHKNIYVNLQHSSPLNIWYDYWKFDFWFPFSSIEYNLQPSFTIKSFTHKMEDMELDKIAKELRTNIEKNINIYRASRNLSTRWNRDETLEIFLQVGLELLHQLNTSRKEDVLLAKLKIEDWKKALYHKVPQSHRLLGFPYHFNTYKSKFISDKLISTLAILESRDRSLCLSLAVCLYSLPGNFISCYIYIITCVKITQRELRKMEIIKEKAQRMAEIKNSQKKKKSSDDQNIDIKTMDDVEEKETFSSTNLDDTLHDEHTDIDTEKKKHEKDNYKNKKIKNTKLKDANIDNEEKDDHHHITDKKVSKSSDLIHSFDKNDISKNTFDKEEFINNLDKDKKYSSFKKGNVVNKKVSIKNEPSINIYEDHKIYDDENISNNIDNMENNQDEIYNLRQGKTIINEFQQVKKPQKYTINEKRDDIKTKKKRSKEKKKQDKLEFEKLIQSNAYFEQEKKKLQEDIKKLEKDKEQFQKEKIRREEKEKQLLLEEKIKLQKEKELFENEKLERKMSYMLKINELEKKKNERNKMEKSYKRMIQKDKEKKKKKESRDKIRRGEEEKMSADENMKEEQKMREEQKVGEEQKVGEEQKVGEEQKLREEQKMREEQKMREEQKMREEQKMREEQKVREEQKMREEQKMREEQKMREEQKVREEQKLREEQKMREEQKMREEQKMREEEKIREEEQMKREKKMRREEKKKRVQEPIKIDEIQVYDIIKNEKMKKKEEKEEKKRKKKKEDIEDKYKIGKEASLDENNNERQIKSKNIQEISDYEYKNIKENKNLNKFDEKLDLNQIYSKASNFYDNQEKKRRTIKVHANRKENSDSTFSHIDDSIKNKKEYLEDSNIARYLYEKRKHDLIGKGNYNFDEPHYGKKMNNVAYQDIKGSNLFKGFIEEPSSKKSPQKKKIVIVRKN.

The tract at residues 16-36 is disordered; that stretch reads NTEKEEGKNAEINENNDPNTQ. Positions 17-26 are enriched in basic and acidic residues; that stretch reads TEKEEGKNAE. Over residues 27–36 the composition is skewed to polar residues; sequence INENNDPNTQ. In terms of domain architecture, C2 spans 497-623; sequence VPRYRQRGDI…FNEKNVRRNK (127 aa). 2 stretches are compositionally biased toward basic and acidic residues: residues 1193 to 1211 and 1230 to 1243; these read DEHT…DNYK and KDDH…KVSK. Disordered stretches follow at residues 1193–1244, 1346–1370, 1456–1635, 1652–1692, and 1827–1846; these read DEHT…VSKS, KYTI…KKQD, KNER…KKRV, NEKM…NNER, and EEPS…VRKN. Residues 1349–1506 adopt a coiled-coil conformation; sequence INEKRDDIKT…DENMKEEQKM (158 aa). 4 stretches are compositionally biased toward basic and acidic residues: residues 1456–1474, 1481–1629, 1652–1663, and 1670–1692; these read KNER…QKDK, ESRD…MRRE, NEKMKKKEEKEE, and KEDI…NNER. Basic residues predominate over residues 1834–1846; that stretch reads SPQKKKIVIVRKN.

It localises to the membrane. Its function is as follows. Binds calcium and phospholipids. Regulates microneme secretion. The sequence is that of C2 domain-containing protein from Plasmodium falciparum (isolate 3D7).